The chain runs to 303 residues: Imidazoleglycerol-phosphate dehydratase (303 aa).

It belongs to the imidazoleglycerol-phosphate dehydratase family.

It is found in the cytoplasm. It carries out the reaction D-erythro-1-(imidazol-4-yl)glycerol 3-phosphate = 3-(imidazol-4-yl)-2-oxopropyl phosphate + H2O. Its pathway is amino-acid biosynthesis; L-histidine biosynthesis; L-histidine from 5-phospho-alpha-D-ribose 1-diphosphate: step 6/9. The protein is Imidazoleglycerol-phosphate dehydratase of Neisseria gonorrhoeae (strain ATCC 700825 / FA 1090).